Consider the following 469-residue polypeptide: UDP-N-acetylmuramoylalanine--D-glutamate ligase (469 aa).

Residue 121-127 (GTNGKST) participates in ATP binding.

The protein belongs to the MurCDEF family.

The protein localises to the cytoplasm. The catalysed reaction is UDP-N-acetyl-alpha-D-muramoyl-L-alanine + D-glutamate + ATP = UDP-N-acetyl-alpha-D-muramoyl-L-alanyl-D-glutamate + ADP + phosphate + H(+). The protein operates within cell wall biogenesis; peptidoglycan biosynthesis. Its function is as follows. Cell wall formation. Catalyzes the addition of glutamate to the nucleotide precursor UDP-N-acetylmuramoyl-L-alanine (UMA). In Agrobacterium fabrum (strain C58 / ATCC 33970) (Agrobacterium tumefaciens (strain C58)), this protein is UDP-N-acetylmuramoylalanine--D-glutamate ligase.